The sequence spans 184 residues: Protein Syd (184 aa).

This sequence belongs to the Syd family.

Its subcellular location is the cell inner membrane. In terms of biological role, interacts with the SecY protein in vivo. May bind preferentially to an uncomplexed state of SecY, thus functioning either as a chelating agent for excess SecY in the cell or as a regulatory factor that negatively controls the translocase function. In Psychromonas ingrahamii (strain DSM 17664 / CCUG 51855 / 37), this protein is Protein Syd.